The chain runs to 90 residues: Small ribosomal subunit protein uS15 (90 aa).

The protein belongs to the universal ribosomal protein uS15 family. As to quaternary structure, part of the 30S ribosomal subunit. Forms a bridge to the 50S subunit in the 70S ribosome, contacting the 23S rRNA.

In terms of biological role, one of the primary rRNA binding proteins, it binds directly to 16S rRNA where it helps nucleate assembly of the platform of the 30S subunit by binding and bridging several RNA helices of the 16S rRNA. Its function is as follows. Forms an intersubunit bridge (bridge B4) with the 23S rRNA of the 50S subunit in the ribosome. This Campylobacter curvus (strain 525.92) protein is Small ribosomal subunit protein uS15.